A 428-amino-acid chain; its full sequence is Phosphoribosylamine--glycine ligase (428 aa).

Residues 107-313 enclose the ATP-grasp domain; sequence KQVMKTYNIP…LVNVIESLLD (207 aa). ATP is bound at residue 133–194; sequence VEAEGVPIVI…EEYLEGEELS (62 aa). Glutamate 283 and asparagine 285 together coordinate Mg(2+).

This sequence belongs to the GARS family. Mg(2+) is required as a cofactor. Mn(2+) serves as cofactor.

The catalysed reaction is 5-phospho-beta-D-ribosylamine + glycine + ATP = N(1)-(5-phospho-beta-D-ribosyl)glycinamide + ADP + phosphate + H(+). It functions in the pathway purine metabolism; IMP biosynthesis via de novo pathway; N(1)-(5-phospho-D-ribosyl)glycinamide from 5-phospho-alpha-D-ribose 1-diphosphate: step 2/2. This Halalkalibacterium halodurans (strain ATCC BAA-125 / DSM 18197 / FERM 7344 / JCM 9153 / C-125) (Bacillus halodurans) protein is Phosphoribosylamine--glycine ligase.